Here is a 706-residue protein sequence, read N- to C-terminus: Forkhead box protein P2 (706 aa).

The span at 1 to 28 shows a compositional bias: polar residues; the sequence is MMQESATETISNSSMNQNGMSTLSSQLD. 2 disordered regions span residues 1–45 and 275–305; these read MMQE…SEVS and IKHG…ITHH. The span at 287 to 296 shows a compositional bias: low complexity; that stretch reads SSSTTSTTTS. The C2H2-type zinc finger occupies 337–362; it reads GVCKWPGCENICEDFGQFLKHLNNEH. The interval 379-400 is leucine-zipper; it reads VQQLEIQLSKERERLQAMMTHL. The interval 413–417 is ctbp1-binding; that stretch reads PLNLV. Positions 495-585 form a DNA-binding region, fork-head; that stretch reads RPPFTYATLI…SQKITASPTL (91 aa). The segment at 672 to 706 is disordered; the sequence is DDEDCPMSLVTTANHSPELEEDRELEEEPLSEDLE. Positions 690-706 are enriched in acidic residues; that stretch reads LEEDRELEEEPLSEDLE.

In terms of assembly, dimerization is required for DNA-binding. In terms of tissue distribution, at stage 15, expressed in the anterior/superior eye field and the caudal branchial arch. At later stages, expression persists in the retina and in the caudal branchial arch. Expressed in the pronephros and the tip of the tail. Beginning with stage 35, expression in the brain is localized to distinct subdomains of the anterior prosencephalon, the medial mesencephalon and to lateral domains of the hindbrain.

The protein resides in the nucleus. Its function is as follows. Transcriptional repressor. The sequence is that of Forkhead box protein P2 from Xenopus laevis (African clawed frog).